Reading from the N-terminus, the 948-residue chain is Isoleucine--tRNA ligase (948 aa).

The 'HIGH' region motif lies at 58-68 (PYANGSIHIGH). E572 is a binding site for L-isoleucyl-5'-AMP. The 'KMSKS' region signature appears at 613 to 617 (KMSKS). K616 contributes to the ATP binding site. Zn(2+)-binding residues include C911, C914, C931, and C934.

Belongs to the class-I aminoacyl-tRNA synthetase family. IleS type 1 subfamily. In terms of assembly, monomer. It depends on Zn(2+) as a cofactor.

The protein localises to the cytoplasm. The catalysed reaction is tRNA(Ile) + L-isoleucine + ATP = L-isoleucyl-tRNA(Ile) + AMP + diphosphate. Catalyzes the attachment of isoleucine to tRNA(Ile). As IleRS can inadvertently accommodate and process structurally similar amino acids such as valine, to avoid such errors it has two additional distinct tRNA(Ile)-dependent editing activities. One activity is designated as 'pretransfer' editing and involves the hydrolysis of activated Val-AMP. The other activity is designated 'posttransfer' editing and involves deacylation of mischarged Val-tRNA(Ile). The polypeptide is Isoleucine--tRNA ligase (Edwardsiella ictaluri (strain 93-146)).